Here is a 627-residue protein sequence, read N- to C-terminus: Mitochondrial distribution and morphology protein 34 (627 aa).

Residues 1-195 form the SMP-LTD domain; that stretch reads MAFNFNWSPL…LPAIIHRLSL (195 aa). Disordered stretches follow at residues 209 to 230, 332 to 470, 486 to 557, and 586 to 627; these read SAQV…NPPQ, ASLA…RTSP, LQRQ…SRPS, and RIQD…AYRH. Low complexity-rich tracts occupy residues 215 to 225 and 332 to 341; these read PSLDGPGLDPL and ASLASSSHSR. Over residues 360–372 the composition is skewed to basic residues; it reads RHSKAHARKRKKR. Basic and acidic residues predominate over residues 373-384; it reads VVDLRRRPKSAD. A compositionally biased stretch (low complexity) spans 390 to 412; sequence SGESAYTETSTTTSAVSVFSGST. Residues 436 to 451 show a composition bias toward basic and acidic residues; sequence TLRDRIAARDDAERNS. Residues 528–557 are compositionally biased toward low complexity; sequence PNASNNYTSSSSPSARDPQQQQPQQLSRPS.

The protein belongs to the MDM34 family. Component of the ER-mitochondria encounter structure (ERMES) or MDM complex, composed of MMM1, MDM10, MDM12 and MDM34.

It is found in the mitochondrion outer membrane. In terms of biological role, component of the ERMES/MDM complex, which serves as a molecular tether to connect the endoplasmic reticulum (ER) and mitochondria. Components of this complex are involved in the control of mitochondrial shape and protein biogenesis, and function in nonvesicular lipid trafficking between the ER and mitochondria. MDM34 is required for the interaction of the ER-resident membrane protein MMM1 and the outer mitochondrial membrane-resident beta-barrel protein MDM10. This is Mitochondrial distribution and morphology protein 34 from Blastomyces gilchristii (strain SLH14081) (Blastomyces dermatitidis).